The sequence spans 459 residues: Trichothecene 3-O-acetyltransferase TRI101 (459 aa).

The Ca(2+) site is built by Asp-218 and Ile-221. Residues Lys-253, 266-269, Asp-302, Gln-318, and Arg-343 each bind CoA; that span reads FVST. Asp-376 serves as a coordination point for Ca(2+). Residues Ser-386 and Lys-390 each coordinate CoA. Glu-449 serves as a coordination point for Ca(2+).

The protein belongs to the trichothecene 3-O-acetyltransferase family.

It functions in the pathway sesquiterpene biosynthesis; trichothecene biosynthesis. Functionally, 3-O-acetyltransferase involved in the biosynthesis of trichothecenes, a very large family of chemically related bicyclic sesquiterpene compounds acting as mycotoxins, including T2-toxin. The biosynthesis of trichothecenes begins with the cyclization of farnesyl diphosphate to trichodiene and is catalyzed by the trichodiene synthase TRI5. Trichodiene undergoes a series of oxygenations catalyzed by the cytochrome P450 monooxygenase TRI4. TRI4 controls the addition of four oxygens at C-2, C-3, C-11, and the C-12, C-13-epoxide to form the intermediate isotrichotriol. Isotrichotriol then undergoes a non-enzymatic isomerization and cyclization to form isotrichodermol. During this process, the oxygen at the C-2 position becomes the pyran ring oxygen and the hydroxyl group at C-11 is lost. More complex type A trichothecenes are built by modifying isotrichodermol through a series of paired hydroxylation and acetylation or acylation steps. Isotrichodermol is converted to isotrichodermin by the acetyltransferase TRI101. TRI101 encodes a C-3 transacetylase that acts as a self-protection or resistance factor during biosynthesis and that the presence of a free C-3 hydroxyl group is a key component of Fusarium trichothecene phytotoxicity. A second hydroxyl group is added to C-15 by the trichothecene C-15 hydroxylase TRI11, producing 15-decalonectrin, which is then acetylated by TRI3, producing calonectrin. A third hydroxyl group is added at C-4 by the cytochrome P450 monooxygenase TRI13, converting calonectrin to 3,15-diacetoxyspirpenol, which is subsequently acetylated bythe acetyltransferase TRI7. A fourth hydroxyl group is added to C-8 by the cytochrome P450 monooxygenase TRI1, followed by the addition of an isovaleryl moiety by TRI16. Finally, the acetyl group is removed from the C-3 position by the trichothecene C-3 esterase TRI8 to produce T-2 toxin. In Fusarium sporotrichioides, this protein is Trichothecene 3-O-acetyltransferase TRI101.